A 267-amino-acid chain; its full sequence is Undecaprenyl-diphosphatase 2 (267 aa).

The next 8 helical transmembrane spans lie at 4 to 24, 43 to 63, 84 to 104, 109 to 129, 147 to 167, 186 to 206, 219 to 239, and 243 to 263; these read IYFIKAFFLGVIEGITEFLPI, EEKVFEVVIQLGGILAVCWLF, FAVIVMISFLPSAIIGALFIH, VLFNTTVVATALIVGGLIILW, IGFKQAIIIGIAQCIAMIPGT, AATEYSFFLAIPTMLGAAIYD, ILAILIGFSAAFISALIVVNA, and FVAKHSLSVFAWYRIALGLII.

It belongs to the UppP family.

It is found in the cell inner membrane. The catalysed reaction is di-trans,octa-cis-undecaprenyl diphosphate + H2O = di-trans,octa-cis-undecaprenyl phosphate + phosphate + H(+). Its function is as follows. Catalyzes the dephosphorylation of undecaprenyl diphosphate (UPP). Confers resistance to bacitracin. This is Undecaprenyl-diphosphatase 2 from Shewanella oneidensis (strain ATCC 700550 / JCM 31522 / CIP 106686 / LMG 19005 / NCIMB 14063 / MR-1).